Consider the following 207-residue polypeptide: MTAIKELKAVARARGGKGAARAERRAGRVPAVIYGEKQEPVTISLGHKEITRIIYAGHFLTTLFEIDVDGVKHRVIPRDYQLDPVKDLPLHVDFLRVSQGASVTVEVPVHFENQDKAPGLKSGGTLNVVAHAVALECPAEAIPDHVVADLTGLEIGDSLHLSKVKLPAGVSSAVTGDDTLATIVAPSGLKEAEADEAAAAAAAAAKA.

It belongs to the bacterial ribosomal protein bL25 family. CTC subfamily. In terms of assembly, part of the 50S ribosomal subunit; part of the 5S rRNA/L5/L18/L25 subcomplex. Contacts the 5S rRNA. Binds to the 5S rRNA independently of L5 and L18.

Functionally, this is one of the proteins that binds to the 5S RNA in the ribosome where it forms part of the central protuberance. The chain is Large ribosomal subunit protein bL25 from Azorhizobium caulinodans (strain ATCC 43989 / DSM 5975 / JCM 20966 / LMG 6465 / NBRC 14845 / NCIMB 13405 / ORS 571).